Reading from the N-terminus, the 218-residue chain is MQKATHSITPEGFPVIGLTALAALVFAIIDCWFMAVVFLLLCWFSVHFFRDPERVVPSAPGAGVSPADGRIIKVQPMPDPFTGEPRMCVCIFMNVFNVHVNRFPVSGTVQSIAYHPGKYFNASWDKASTDNERCAYDIVDADGLRWSMVQIAGLIARRIVCRVEEGDTLRRGERCGMIRFGSRVDVYLPEEYEPKVTVGETVFAGQTVLAAKKEQPAE.

The active-site Schiff-base intermediate with substrate; via pyruvic acid is the S182. Pyruvic acid (Ser); by autocatalysis is present on S182.

The protein belongs to the phosphatidylserine decarboxylase family. PSD-A subfamily. As to quaternary structure, heterodimer of a large membrane-associated beta subunit and a small pyruvoyl-containing alpha subunit. Pyruvate serves as cofactor. Post-translationally, is synthesized initially as an inactive proenzyme. Formation of the active enzyme involves a self-maturation process in which the active site pyruvoyl group is generated from an internal serine residue via an autocatalytic post-translational modification. Two non-identical subunits are generated from the proenzyme in this reaction, and the pyruvate is formed at the N-terminus of the alpha chain, which is derived from the carboxyl end of the proenzyme. The post-translation cleavage follows an unusual pathway, termed non-hydrolytic serinolysis, in which the side chain hydroxyl group of the serine supplies its oxygen atom to form the C-terminus of the beta chain, while the remainder of the serine residue undergoes an oxidative deamination to produce ammonia and the pyruvoyl prosthetic group on the alpha chain.

The protein resides in the cell membrane. It carries out the reaction a 1,2-diacyl-sn-glycero-3-phospho-L-serine + H(+) = a 1,2-diacyl-sn-glycero-3-phosphoethanolamine + CO2. It participates in phospholipid metabolism; phosphatidylethanolamine biosynthesis; phosphatidylethanolamine from CDP-diacylglycerol: step 2/2. Functionally, catalyzes the formation of phosphatidylethanolamine (PtdEtn) from phosphatidylserine (PtdSer). The chain is Phosphatidylserine decarboxylase proenzyme from Oleidesulfovibrio alaskensis (strain ATCC BAA-1058 / DSM 17464 / G20) (Desulfovibrio alaskensis).